Reading from the N-terminus, the 343-residue chain is Sulfate/thiosulfate import ATP-binding protein CysA (343 aa).

The ABC transporter domain occupies 3-237 (IRISHLRKQF…PASPFVYSFV (235 aa)). 35-42 (GPSGSGKT) serves as a coordination point for ATP.

The protein belongs to the ABC transporter superfamily. Sulfate/tungstate importer (TC 3.A.1.6) family. The complex is composed of two ATP-binding proteins (CysA), two transmembrane proteins (CysT and CysW) and a solute-binding protein (CysP).

Its subcellular location is the cell inner membrane. It catalyses the reaction sulfate(out) + ATP + H2O = sulfate(in) + ADP + phosphate + H(+). The catalysed reaction is thiosulfate(out) + ATP + H2O = thiosulfate(in) + ADP + phosphate + H(+). Part of the ABC transporter complex CysAWTP involved in sulfate/thiosulfate import. Responsible for energy coupling to the transport system. The chain is Sulfate/thiosulfate import ATP-binding protein CysA from Xanthomonas campestris pv. campestris (strain ATCC 33913 / DSM 3586 / NCPPB 528 / LMG 568 / P 25).